The primary structure comprises 338 residues: Anthranilate phosphoribosyltransferase (338 aa).

5-phospho-alpha-D-ribose 1-diphosphate is bound by residues G83, 86–87 (GD), S91, 93–96 (NCST), 111–119 (KHGNRAVSS), and A123. G83 provides a ligand contact to anthranilate. S95 is a binding site for Mg(2+). Residue N114 participates in anthranilate binding. R169 contributes to the anthranilate binding site. Mg(2+)-binding residues include D228 and E229.

The protein belongs to the anthranilate phosphoribosyltransferase family. In terms of assembly, homodimer. It depends on Mg(2+) as a cofactor.

It carries out the reaction N-(5-phospho-beta-D-ribosyl)anthranilate + diphosphate = 5-phospho-alpha-D-ribose 1-diphosphate + anthranilate. It participates in amino-acid biosynthesis; L-tryptophan biosynthesis; L-tryptophan from chorismate: step 2/5. Functionally, catalyzes the transfer of the phosphoribosyl group of 5-phosphorylribose-1-pyrophosphate (PRPP) to anthranilate to yield N-(5'-phosphoribosyl)-anthranilate (PRA). In Nitratidesulfovibrio vulgaris (strain DSM 19637 / Miyazaki F) (Desulfovibrio vulgaris), this protein is Anthranilate phosphoribosyltransferase.